The following is a 480-amino-acid chain: 3-isopropylmalate dehydratase large subunit (480 aa).

Positions 360, 418, and 421 each coordinate [4Fe-4S] cluster.

The protein belongs to the aconitase/IPM isomerase family. LeuC type 1 subfamily. In terms of assembly, heterodimer of LeuC and LeuD. It depends on [4Fe-4S] cluster as a cofactor.

The catalysed reaction is (2R,3S)-3-isopropylmalate = (2S)-2-isopropylmalate. It functions in the pathway amino-acid biosynthesis; L-leucine biosynthesis; L-leucine from 3-methyl-2-oxobutanoate: step 2/4. Functionally, catalyzes the isomerization between 2-isopropylmalate and 3-isopropylmalate, via the formation of 2-isopropylmaleate. This chain is 3-isopropylmalate dehydratase large subunit, found in Anaeromyxobacter dehalogenans (strain 2CP-1 / ATCC BAA-258).